Here is a 1416-residue protein sequence, read N- to C-terminus: DNA-directed RNA polymerase subunit beta' (1416 aa).

Cys71, Cys73, Cys86, and Cys89 together coordinate Zn(2+). Mg(2+) is bound by residues Asp461, Asp463, and Asp465. Zn(2+) is bound by residues Cys815, Cys892, Cys899, and Cys902.

This sequence belongs to the RNA polymerase beta' chain family. In terms of assembly, the RNAP catalytic core consists of 2 alpha, 1 beta, 1 beta' and 1 omega subunit. When a sigma factor is associated with the core the holoenzyme is formed, which can initiate transcription. Requires Mg(2+) as cofactor. Zn(2+) is required as a cofactor.

It catalyses the reaction RNA(n) + a ribonucleoside 5'-triphosphate = RNA(n+1) + diphosphate. Its function is as follows. DNA-dependent RNA polymerase catalyzes the transcription of DNA into RNA using the four ribonucleoside triphosphates as substrates. This is DNA-directed RNA polymerase subunit beta' from Blochmanniella pennsylvanica (strain BPEN).